Here is a 323-residue protein sequence, read N- to C-terminus: ATP synthase gamma chain (323 aa).

The protein belongs to the ATPase gamma chain family. F-type ATPases have 2 components, CF(1) - the catalytic core - and CF(0) - the membrane proton channel. CF(1) has five subunits: alpha(3), beta(3), gamma(1), delta(1), epsilon(1). CF(0) has three main subunits: a, b and c.

The protein resides in the cell inner membrane. Produces ATP from ADP in the presence of a proton gradient across the membrane. The gamma chain is believed to be important in regulating ATPase activity and the flow of protons through the CF(0) complex. This Rickettsia peacockii (strain Rustic) protein is ATP synthase gamma chain.